A 194-amino-acid chain; its full sequence is Peptidyl-tRNA hydrolase (194 aa).

Tyrosine 17 contacts tRNA. Histidine 22 (proton acceptor) is an active-site residue. TRNA contacts are provided by tyrosine 68, asparagine 70, and asparagine 116.

It belongs to the PTH family. In terms of assembly, monomer.

It is found in the cytoplasm. The enzyme catalyses an N-acyl-L-alpha-aminoacyl-tRNA + H2O = an N-acyl-L-amino acid + a tRNA + H(+). In terms of biological role, hydrolyzes ribosome-free peptidyl-tRNAs (with 1 or more amino acids incorporated), which drop off the ribosome during protein synthesis, or as a result of ribosome stalling. Functionally, catalyzes the release of premature peptidyl moieties from peptidyl-tRNA molecules trapped in stalled 50S ribosomal subunits, and thus maintains levels of free tRNAs and 50S ribosomes. This chain is Peptidyl-tRNA hydrolase, found in Pseudomonas fluorescens (strain SBW25).